Here is a 314-residue protein sequence, read N- to C-terminus: Ribosomal RNA small subunit methyltransferase H (314 aa).

S-adenosyl-L-methionine contacts are provided by residues 31-33, Asp49, Phe76, Asp118, and Gln125; that span reads GGY.

This sequence belongs to the methyltransferase superfamily. RsmH family.

The protein resides in the cytoplasm. It carries out the reaction cytidine(1402) in 16S rRNA + S-adenosyl-L-methionine = N(4)-methylcytidine(1402) in 16S rRNA + S-adenosyl-L-homocysteine + H(+). Functionally, specifically methylates the N4 position of cytidine in position 1402 (C1402) of 16S rRNA. This is Ribosomal RNA small subunit methyltransferase H from Wolbachia pipientis wMel.